The chain runs to 111 residues: Universal stress protein B (111 aa).

2 helical membrane-spanning segments follow: residues 1-21 (MIST…NMAR) and 90-110 (FILT…LLIW).

The protein belongs to the universal stress protein B family.

It is found in the cell inner membrane. The protein is Universal stress protein B of Escherichia fergusonii (strain ATCC 35469 / DSM 13698 / CCUG 18766 / IAM 14443 / JCM 21226 / LMG 7866 / NBRC 102419 / NCTC 12128 / CDC 0568-73).